The following is a 347-amino-acid chain: Neutral protease 2 homolog MGG_10927 (347 aa).

An N-terminal signal peptide occupies residues 1 to 19 (MKYSVGITALLATLAQGAA). Residues 20–176 (VMSKRDIPLD…RSYLAKRTMV (157 aa)) constitute a propeptide that is removed on maturation. Cystine bridges form between cysteine 180–cysteine 250 and cysteine 257–cysteine 275. Histidine 299 serves as a coordination point for Zn(2+). The active site involves glutamate 300. Histidine 303 contributes to the Zn(2+) binding site.

This sequence belongs to the peptidase M35 family. Zn(2+) serves as cofactor.

Its subcellular location is the secreted. It carries out the reaction Preferential cleavage of bonds with hydrophobic residues in P1'. Also 3-Asn-|-Gln-4 and 8-Gly-|-Ser-9 bonds in insulin B chain.. In terms of biological role, secreted metalloproteinase that allows assimilation of proteinaceous substrates. Shows high activities on basic nuclear substrates such as histone and protamine. This chain is Neutral protease 2 homolog MGG_10927, found in Pyricularia oryzae (strain 70-15 / ATCC MYA-4617 / FGSC 8958) (Rice blast fungus).